The following is a 5376-amino-acid chain: MALPVWTLMLLVGAAWGQEQVPAWRPNSPDLGPMVHTSREDSILSKCDFEDNSRPFCDWSQMSADDGDWIRTTGPSLTGTSGPPGGYPNGEGYYLHMDPKTFPQGGVARLRSPDIWEQGPLCVHFAFHMFGLSWGAQLRLLLLRGRKHLRPYVLWKHVNTQSPSWMPTTVTVPADHDIPSWLMFEGMRGNTAYLDISLDGLSIQRGTCNQVCMSQMCTFDTLNDLCGWSWVPTATGAKWTQKKGPTGKQGVGPAEDFSNPGNGYYMLLDSTNARPGQKAVLLSPLSHSRGCMTLSFHYIMHGQGHEEGLFVYATFLGNIRKYTLFSGHPGPDWQAVSVNYTGQGQIQFMVVGMFGNIPEPAIAVDAISIAPCGESFPQCDFEDRVHPFCDWNQVYGDMGHWSWGSKSVPTLIAGSPREFPYGGEHYIFFDSVKLSQEGQSARLVSPPFCAPGGICVEFAYHMYGLGKGTTLKLLLGSPAGSSPIPLWNRVGSQSSGWMNSSVTIPKGYQQPMQLFIEATRGTSTAFVVALNFILISHGPCRVLLQTEIPSSPLLPPTGPSESTVPTLPMEQPTSPTKATTVTIEIPTTPTEEATIPTETTTVPTEVINVSPKETSIPPEVTIPTEVITVSPEEIISPTEVTPVPTDVTAAYVEATNASPEETSVPPEVTILTEVTTVSPEETTVPTEVPIVLIEATAFPTGETTLYTEVPTVPTEVTGVHTEVTNVSPEETSVPTEETISTEVTTVSPEETTVPTEVPIVLIEATASPTGEITLYTEVPTVPTEVTGVHTEVTNVSPEETSVPTEETISTEVTTVSPEETTLPTEVPTVSTEVTNVSPEETSVPPEETILTTLYTEVPTVPTEVTGVHTEVTNVSPEETSVPTEETISTEVTTVSPEETTLPTEVPTVSTEVTNVSPEETSVPPEETILTEITTVSPEETVFPIEGTTLPTEVLTVPIEVTTFPTGETTVPTEVPTVSTEMTGVHTEVTTVFPEETSIPTEVATVLPASIPPEETTTPTEVTTTPPEETTIPAEVTTVPPASIPPEETASLTEVTTTPPEETTTPTEVTTVPPEKTTIPTEVTTVPPASIFPEETTVPPEETTIASEETTVSTQETTLLTEQSAVTQTSIACRPPCPSPPLMPIGPLLSKPPGVSMFSLAPTTGVSTTESCPPNAHIELCACPASCESPKPSCQPPCIPGCVCNPGFLFSNNQCINESSCNCPYNNKHYKPGEEWFTPNCTERCRCLPGSLMECQISQCGTHTVCQLKSDQYQCEPYGKATCLVYGDLHFVTFDERHIGFTGTCTYILTQTCSNSTDHFFRITANTEERGVEGVSCLDKVVISLPETTVTMISGRHTLIGDQEVTLPAILSDDTYVGLSGRFVELRTTFGLRVRWDGDQQLFVTVSSTFSGKLCGFCGNYDGDSSNDNLKSDGMMTHDEEELRLSWQVEEDEDKDWVSSRCQKKKNPPSCDAALGSTMSGPKLCGQLVNPSGPFEACLLHLKASSFLDNCVTDMCSFQGLQQKLCARMSAMTATCQDAGYPVKPWREPQFCPLVCPKNSRYSLCAKPCPETCHPISTTQHCSDKCVEGCECDPGFILSGSECVPSSQCGCTSFQGRYFKLQEQWFNPDCKEICTCESHNHILCKPWKCKAQEACSYKNGVLGCHAQGAATCMVSGDPHYLTFDGALHHFMGTCTYVLTQPCWSKSQENNFVVSATNEIHDGNLEVSYVKAVHVQVFDLKISMFKGQKVVLNNQRVVLPVWPSQGRVTIRLSGIFVLLYTNFGLQVRYDGRHLVEVTVPSSYTGSLCGLCGNYNNNSMDDNLRADMKPAGNSLLLGAAWKILEASDPGCFLAGGKPSRCADSDMDDVWTKKCAILMNPLGPFSNCHEAVPPQASFSSCVYGQCETNGDNLTFCHSLQAYASLCAQAGQVTTWRNSTFCPMRCPPRSSYNPCANSCPATCLTLSTPRDCPTLPCVEGCECQSGHILSGTTCVPLRQCGCSDQDGSYHLLGESWYTEKTCTTLCTCSAHSNITCSPTACKANHVCLRQEGLLRCAAEMGECRISEDSQIVSFDDHSHPIQDTCTYILVKVCHPNTNMPFFMISAKTDINTNGKNKTFGVYQLYIDIFNFHITLQKDHLVLISLINDSIVTLPTTTHIPGVSVMTEDVYTIVTIKDEIQVKFESNNFLDVKIPASSNGKVCGVCGNFNGEEEDELMTPSGELAEDEQEFMNSWKDKSMDPNCQKIEGQNLQVEQQEIMNGKCRPIDFEKAQANCQTALQGPAWAHCSSRVPIKPFLLKCMNSFCEFRELFRALCDSLQSFEDACQNQGLKPPIWRNSSFCPLECPAHSHYTNCLPSCPPSCLDPDSRCEGSGHKVPATCREGCICQPDYVLLNDKCVLRSHCGCKDAQGVFIPAGKTWISEDCTQSCTCMKGSMRCWDFQCPPGTYCKNSNDGSSNCVKISLQCPAHSKFTDCLPPCHPSCSDPDGHCEGISTNAHSNCKEGCVCQPGYVLRNDKCVLRIECGCQHTQGGFIPAGKNWTSRGCSQSCDCMEGVIRCQNFQCPSGTYCQDIEDGTSNCANITLQCPAHSSFTNCLPPCQPSCSDPEGHCGGSTTKAPSACQEGCVCEPDYVVLNNKCVPRIECGCKDAQGVLIPADKIWINKGCTQTCACVTGTIHCRDFQCPSGTYCKDIKDDASNCTEIILQCPDHSLYTHCLPSCLLSCSDPDGLCRGTSPEAPSTCKEGCVCDPDYVLSNDKCVLRIECGCKDAQGVLIPAGKTWINRGCTQSCSCMGGAIQCQNFKCPSEAYCQDMEDGNSNCTSIPLQCPAHSHYTNCLPTCQPSCSDPDGHCEGSSTKAPSACKEGCVCEPDYVMLNNKCVPRIECGCKDTQGVLIPADKTWINRGCTQSCTCRGGAIQCQKYHCSSGTYCKDMEDDSSSCATITLQCPAHSHFTNCLPPCQPSCLDSEGHCEGSTTKAPSACQEGCVCEPDYVVLNNKCVPRIECGCKDAQGVLIPADKTWINRGCTQSCTCKGGAIQCQKFQCPSETYCKDIEDGNSNCTRISLQCPANSNFTSCLPSCQPSCSNTDVHCEGSSPNTLSSCREGCVCQSGYVLHNDKCILRNQCGCKDAQGALIPEGKTWITSGCTQSCNCTGGAIQCQNFQCPLKTYCKDLKDGSSNCTNIPLQCPAHSRYTNCLPSCPPLCLDPEGLCEGTSPKVPSTCREGCICQPGYLMHKNKCVLRIFCGCKNTQGAFISADKTWISRGCTQSCTCPAGAIHCRNFKCPSGTYCKNGDNGSSNCTEITLQCPTNSQFTDCLPSCVPSCSNRCEVTSPSVPSSCREGCLCNHGFVFSEDKCVPRTQCGCKDARGAIIPAGKTWTSKGCTQSCACVEGNIQCQNFQCPPETYCKDNSEGSSTCTKITLQCPAHTQYTSCLPSCLPSCLDPEGLCKDISPKVPSTCKEGCVCQSGYVLNSDKCVLRAECDCKDAQGALIPAGKTWTSPGCTQSCACMGGAVQCQSSQCPPGTYCKDNEDGNSNCAKITLQCPAHSLFTNCLPPCLPSCLDPDGLCKGASPKVPSTCKEGCICQSGYVLSNNKCLLRNRCGCKDAHGALIPEDKTWVSRGCTQSCVCTGGSIQCLSSQCPPGAYCKDNEDGSSNCARIPPQCPANSHYTDCFPPCPPSCSDPEGHCEASGPRVLSTCREGCLCNPGFVLDRDKCVPRVECGCKDAQGALIPSGKTWTSPGCTQSCACMGGVVQCQSSQCPPGTYCKDNEDGNSNCAKITLQCPTHSNYTDCLPFCLPSCLDPSALCGGTSPKGPSTCKEGCVCQPGYVLDKDKCILKIECGCRDTQGAVIPAGKTWLSTGCIQSCACVEGTIQCQNFQCPPGTYCNHNNNCAKIPLQCPAHSHFTSCLPSCPPSCANLDGSCEQTSPKVPSTCKEGCLCQPGYFLNNGKCVLQTHCDCKDAEGGLVPAGKTWTSKDCTQSCACTGGAVQCQNFQCPLGTYCKDSGDGSSNCTKIHKGAMGDGVLMAGGIRALQCPAHSHFTSCLPSCPPSCSNLDGSCVESNFKAPSVCKKGCICQPGYLLNNDKCVLRIQCGCKDTQGGLIPAGRTWISSDCTKSCSCMGGIIQCRDFQCPPGTYCKESNDSSRTCAKIPLQCPAHSHYTNCLPACSRSCTDLDGHCEGTSPKVPSPCKEGCLCQPGYVVHNHKCVLQIHCGCKDAQGGFVPAGKTWISRGCTQSCACVGGAVQCHNFTCPTGTQCQNSSCSKITVQCPAHSQYTTCLPSCLPSCFDPEGLCGGASPRAPSTCREGCVCEADYVLREDKCVLRTQCGCKDAQGDLIPANKTWLTRGCAQKCTCKGGNIHCWNFKCPLGTECKDSVDGGSNCTKIALQCPAHSHHTYCLPSCIPSCSNVNDRCESTSLQRPSTCIEGCLCHSGFVFSKDKCVPRTQCGCKDSQGTLIPAGKNWITTGCSQRCTCTGGLVQCHDFQCPSGAECQDIEDGNSNCVEITVQCPAHSHYSKCLPPCQPSCSDPDGHCEGTSPEAPSTCEEGCVCEPDYVLSNDKCVPSSECGCKDAHGVLIPESKTWVSRGCTKNCTCKGGTVQCHDFSCPTGSRCLDNNEGNSNCVTYALKCPAHSLYTNCLPSCLPSCSDPEGLCGGTSPEVPSTCKEGCICQSGYVLHKNKCMLRIHCDCKDFQGSLIKTGQTWISSGCSKICTCKGGFFQCQSYKCPSGTQCEESEDGSSNCVSSTMKCPANSLYTHCLPTCLPSCSNPDGRCEGTSHKAPSTCREGCVCQPGYLLNKDTCVHKNQCGCKDIRGNIIPAGNTWISSDCTQSCACTDGVIQCQNFVCPSGSHCQYNEDGSSDCAANKLERCTIFGDPYYLTFDGFTYHFLGRMNYYLIKTVDKLPRGIEPLIMEGRNKISPKGSSTLHEVTTIVYGYKIQLQEELVVLVNDEKVAVPYNPNEHLRVMLRAQRLLLVTDFEMVLDFDGKHSAVISLPTTYRGLTRGLCGNYDRDQSNELMLPSGVLTSNVHVFGNSWEVKAQHAFFRFPRALPEDEERDEEPDLLQSECSQEQTALISSTQACRVLVDPQGPFAACHQIIAPEPFEQRCMLDMCTGWKTKEEEELRCRVLSGYAIICQEAGANMTGWRDHTHCAMTCPANTVYQRCMTPCPASCAKFVTPKVCEGPCVEGCASLPGYIYSDTQSLPVTHCGCTADGIYYKLGDSFVTNDCSQHCTCASQGILLCEPYGCRAGESCMVANFTRGCFQDSPCLQNPCHNDGRCEEQGATFICHCDFGYGGEFCTEPQDITTRKKIEASSLVAILPGVLVMVLVPVLLPRVYVYMATRTTMGRRRMKRKEKKLLRQSRLRLEDADVPEPTFKATEF.

A signal peptide spans 1-17; sequence MALPVWTLMLLVGAAWG. Topologically, residues 18-5310 are extracellular; sequence QEQVPAWRPN…TTRKKIEASS (5293 aa). MAM domains are found at residues 45–210, 215–374, and 377–542; these read SKCD…TCNQ, QMCT…PCGE, and PQCD…PCRV. Residues asparagine 339 and asparagine 499 are each glycosylated (N-linked (GlcNAc...) asparagine). Residues 547 to 1170 are 80 X heptapeptide repeats (approximate) (mucin-like domain); that stretch reads EIPSSPLLPP…PTTGVSTTES (624 aa). Disordered stretches follow at residues 553–579 and 1037–1113; these read LLPP…TKAT and TVPP…TVST. Low complexity predominate over residues 1052–1113; the sequence is TEVTTTPPEE…IASEETTVST (62 aa). Residues 1171–1220 enclose the TIL 1 domain; that stretch reads CPPNAHIELCACPASCESPKPSCQPPCIPGCVCNPGFLFSNNQCINESSC. Asparagine 1216, asparagine 1239, and asparagine 1314 each carry an N-linked (GlcNAc...) asparagine glycan. The 49-residue stretch at 1227–1275 folds into the VWFC 1 domain; sequence KHYKPGEEWFTPNCTERCRCLPGSLMECQISQCGTHTVCQLKSDQYQCE. One can recognise a VWFD 1 domain in the interval 1280-1462; it reads ATCLVYGDLH…DKDWVSSRCQ (183 aa). Cystine bridges form between cysteine 1282-cysteine 1417 and cysteine 1304-cysteine 1461. Positions 1555-1608 constitute a TIL 2 domain; sequence CPKNSRYSLCAKPCPETCHPISTTQHCSDKCVEGCECDPGFILSGSECVPSSQC. Residues 1609 to 1664 form the VWFC 2 domain; sequence GCTSFQGRYFKLQEQWFNPDCKEICTCESHNHILCKPWKCKAQEACSYKNGVLGCH. The VWFD 2 domain occupies 1669 to 1849; sequence ATCMVSGDPH…ILEASDPGCF (181 aa). 2 disulfide bridges follow: cysteine 1671-cysteine 1809 and cysteine 1693-cysteine 1848. N-linked (GlcNAc...) asparagine glycans are attached at residues asparagine 1814, asparagine 1908, and asparagine 1933. One can recognise a TIL 3 domain in the interval 1941–1995; sequence CPPRSSYNPCANSCPATCLTLSTPRDCPTLPCVEGCECQSGHILSGTTCVPLRQC. In terms of domain architecture, VWFC 3 spans 1996 to 2052; sequence GCSDQDGSYHLLGESWYTEKTCTTLCTCSAHSNITCSPTACKANHVCLRQEGLLRCA. N-linked (GlcNAc...) asparagine glycans are attached at residues asparagine 2028, asparagine 2111, asparagine 2142, and asparagine 2332. The VWFD 3 domain maps to 2056 to 2239; sequence GECRISEDSQ…KDKSMDPNCQ (184 aa). Intrachain disulfides connect cysteine 2058–cysteine 2200 and cysteine 2080–cysteine 2238. Residues 2340–2398 enclose the TIL 4 domain; it reads CPAHSHYTNCLPSCPPSCLDPDSRCEGSGHKVPATCREGCICQPDYVLLNDKCVLRSHC. The region spanning 2399–2454 is the VWFC 4 domain; that stretch reads GCKDAQGVFIPAGKTWISEDCTQSCTCMKGSMRCWDFQCPPGTYCKNSNDGSSNCV. The TIL 5 domain occupies 2460-2518; sequence CPAHSKFTDCLPPCHPSCSDPDGHCEGISTNAHSNCKEGCVCQPGYVLRNDKCVLRIEC. Residues 2519-2574 form the VWFC 5 domain; that stretch reads GCQHTQGGFIPAGKNWTSRGCSQSCDCMEGVIRCQNFQCPSGTYCQDIEDGTSNCA. Asparagine 2533 and asparagine 2575 each carry an N-linked (GlcNAc...) asparagine glycan. The 59-residue stretch at 2580–2638 folds into the TIL 6 domain; the sequence is CPAHSSFTNCLPPCQPSCSDPEGHCGGSTTKAPSACQEGCVCEPDYVVLNNKCVPRIEC. A VWFC 6 domain is found at 2639-2694; the sequence is GCKDAQGVLIPADKIWINKGCTQTCACVTGTIHCRDFQCPSGTYCKDIKDDASNCT. Asparagine 2692 is a glycosylation site (N-linked (GlcNAc...) asparagine). Residues 2700–2758 form the TIL 7 domain; it reads CPDHSLYTHCLPSCLLSCSDPDGLCRGTSPEAPSTCKEGCVCDPDYVLSNDKCVLRIEC. The VWFC 7 domain maps to 2759–2814; the sequence is GCKDAQGVLIPAGKTWINRGCTQSCSCMGGAIQCQNFKCPSEAYCQDMEDGNSNCT. Asparagine 2812 carries an N-linked (GlcNAc...) asparagine glycan. Residues 2820–2878 enclose the TIL 8 domain; it reads CPAHSHYTNCLPTCQPSCSDPDGHCEGSSTKAPSACKEGCVCEPDYVMLNNKCVPRIEC. The VWFC 8 domain maps to 2879–2934; it reads GCKDTQGVLIPADKTWINRGCTQSCTCRGGAIQCQKYHCSSGTYCKDMEDDSSSCA. In terms of domain architecture, TIL 9 spans 2940 to 2998; it reads CPAHSHFTNCLPPCQPSCLDSEGHCEGSTTKAPSACQEGCVCEPDYVVLNNKCVPRIEC. In terms of domain architecture, VWFC 9 spans 2999–3054; it reads GCKDAQGVLIPADKTWINRGCTQSCTCKGGAIQCQKFQCPSETYCKDIEDGNSNCT. 4 N-linked (GlcNAc...) asparagine glycosylation sites follow: asparagine 3052, asparagine 3065, asparagine 3144, and asparagine 3172. The TIL 10 domain maps to 3060 to 3118; the sequence is CPANSNFTSCLPSCQPSCSNTDVHCEGSSPNTLSSCREGCVCQSGYVLHNDKCILRNQC. The 56-residue stretch at 3119–3174 folds into the VWFC 10 domain; it reads GCKDAQGALIPEGKTWITSGCTQSCNCTGGAIQCQNFQCPLKTYCKDLKDGSSNCT. The region spanning 3180-3238 is the TIL 11 domain; it reads CPAHSRYTNCLPSCPPLCLDPEGLCEGTSPKVPSTCREGCICQPGYLMHKNKCVLRIFC. Residues 3239-3294 enclose the VWFC 11 domain; that stretch reads GCKNTQGAFISADKTWISRGCTQSCTCPAGAIHCRNFKCPSGTYCKNGDNGSSNCT. 2 N-linked (GlcNAc...) asparagine glycosylation sites follow: asparagine 3288 and asparagine 3292. In terms of domain architecture, TIL 12 spans 3300-3355; that stretch reads CPTNSQFTDCLPSCVPSCSNRCEVTSPSVPSSCREGCLCNHGFVFSEDKCVPRTQC. A VWFC 12 domain is found at 3356-3411; sequence GCKDARGAIIPAGKTWTSKGCTQSCACVEGNIQCQNFQCPPETYCKDNSEGSSTCT. In terms of domain architecture, TIL 13 spans 3417–3475; the sequence is CPAHTQYTSCLPSCLPSCLDPEGLCKDISPKVPSTCKEGCVCQSGYVLNSDKCVLRAEC. In terms of domain architecture, VWFC 13 spans 3476 to 3531; it reads DCKDAQGALIPAGKTWTSPGCTQSCACMGGAVQCQSSQCPPGTYCKDNEDGNSNCA. Positions 3537–3595 constitute a TIL 14 domain; that stretch reads CPAHSLFTNCLPPCLPSCLDPDGLCKGASPKVPSTCKEGCICQSGYVLSNNKCLLRNRC. Residues 3596-3651 enclose the VWFC 14 domain; that stretch reads GCKDAHGALIPEDKTWVSRGCTQSCVCTGGSIQCLSSQCPPGAYCKDNEDGSSNCA. The region spanning 3657–3715 is the TIL 15 domain; sequence CPANSHYTDCFPPCPPSCSDPEGHCEASGPRVLSTCREGCLCNPGFVLDRDKCVPRVEC. The VWFC 15 domain maps to 3716–3771; sequence GCKDAQGALIPSGKTWTSPGCTQSCACMGGVVQCQSSQCPPGTYCKDNEDGNSNCA. Residues 3777–3835 form the TIL 16 domain; sequence CPTHSNYTDCLPFCLPSCLDPSALCGGTSPKGPSTCKEGCVCQPGYVLDKDKCILKIEC. Asparagine 3782 carries N-linked (GlcNAc...) asparagine glycosylation. One can recognise a VWFC 16 domain in the interval 3836 to 3891; it reads GCRDTQGAVIPAGKTWLSTGCIQSCACVEGTIQCQNFQCPPGTYCNHNNNCAKIPL. One can recognise a TIL 17 domain in the interval 3893–3951; that stretch reads CPAHSHFTSCLPSCPPSCANLDGSCEQTSPKVPSTCKEGCLCQPGYFLNNGKCVLQTHC. The 56-residue stretch at 3952–4007 folds into the VWFC 17 domain; the sequence is DCKDAEGGLVPAGKTWTSKDCTQSCACTGGAVQCQNFQCPLGTYCKDSGDGSSNCT. Residue asparagine 4005 is glycosylated (N-linked (GlcNAc...) asparagine). Residues 4029–4087 enclose the TIL 18 domain; the sequence is CPAHSHFTSCLPSCPPSCSNLDGSCVESNFKAPSVCKKGCICQPGYLLNNDKCVLRIQC. The VWFC 18 domain occupies 4088–4143; that stretch reads GCKDTQGGLIPAGRTWISSDCTKSCSCMGGIIQCRDFQCPPGTYCKESNDSSRTCA. The N-linked (GlcNAc...) asparagine glycan is linked to asparagine 4136. Residues 4149-4207 enclose the TIL 19 domain; it reads CPAHSHYTNCLPACSRSCTDLDGHCEGTSPKVPSPCKEGCLCQPGYVVHNHKCVLQIHC. A VWFC 19 domain is found at 4208–4262; that stretch reads GCKDAQGGFVPAGKTWISRGCTQSCACVGGAVQCHNFTCPTGTQCQNSSCSKITV. N-linked (GlcNAc...) asparagine glycans are attached at residues asparagine 4243 and asparagine 4254. One can recognise a TIL 20 domain in the interval 4264–4322; sequence CPAHSQYTTCLPSCLPSCFDPEGLCGGASPRAPSTCREGCVCEADYVLREDKCVLRTQC. Residues 4323 to 4378 form the VWFC 20 domain; it reads GCKDAQGDLIPANKTWLTRGCAQKCTCKGGNIHCWNFKCPLGTECKDSVDGGSNCT. 2 N-linked (GlcNAc...) asparagine glycosylation sites follow: asparagine 4335 and asparagine 4376. Positions 4384–4442 constitute a TIL 21 domain; the sequence is CPAHSHHTYCLPSCIPSCSNVNDRCESTSLQRPSTCIEGCLCHSGFVFSKDKCVPRTQC. Residues 4443–4498 enclose the VWFC 21 domain; sequence GCKDSQGTLIPAGKNWITTGCSQRCTCTGGLVQCHDFQCPSGAECQDIEDGNSNCV. In terms of domain architecture, TIL 22 spans 4504–4562; it reads CPAHSHYSKCLPPCQPSCSDPDGHCEGTSPEAPSTCEEGCVCEPDYVLSNDKCVPSSEC. Residues 4563–4618 enclose the VWFC 22 domain; sequence GCKDAHGVLIPESKTWVSRGCTKNCTCKGGTVQCHDFSCPTGSRCLDNNEGNSNCV. Asparagine 4586 carries an N-linked (GlcNAc...) asparagine glycan. Residues 4624–4682 enclose the TIL 23 domain; it reads CPAHSLYTNCLPSCLPSCSDPEGLCGGTSPEVPSTCKEGCICQSGYVLHKNKCMLRIHC. A VWFC 23 domain is found at 4683–4738; that stretch reads DCKDFQGSLIKTGQTWISSGCSKICTCKGGFFQCQSYKCPSGTQCEESEDGSSNCV. The region spanning 4744–4802 is the TIL 24 domain; sequence CPANSLYTHCLPTCLPSCSNPDGRCEGTSHKAPSTCREGCVCQPGYLLNKDTCVHKNQC. Residues 4803 to 4858 form the VWFC 24 domain; that stretch reads GCKDIRGNIIPAGNTWISSDCTQSCACTDGVIQCQNFVCPSGSHCQYNEDGSSDCA. Residues 4863–5038 enclose the VWFD 4 domain; it reads ERCTIFGDPY…SWEVKAQHAF (176 aa). An intrachain disulfide couples cysteine 4865 to cysteine 5001. Asparagine 5136 is a glycosylation site (N-linked (GlcNAc...) asparagine). The region spanning 5150–5203 is the TIL 25 domain; sequence CPANTVYQRCMTPCPASCAKFVTPKVCEGPCVEGCASLPGYIYSDTQSLPVTHC. The region spanning 5204–5258 is the VWFC 25 domain; the sequence is GCTADGIYYKLGDSFVTNDCSQHCTCASQGILLCEPYGCRAGESCMVANFTRGCF. Residue asparagine 5252 is glycosylated (N-linked (GlcNAc...) asparagine). One can recognise an EGF-like domain in the interval 5259 to 5295; the sequence is QDSPCLQNPCHNDGRCEEQGATFICHCDFGYGGEFCT. 3 disulfides stabilise this stretch: cysteine 5263–cysteine 5274, cysteine 5268–cysteine 5283, and cysteine 5285–cysteine 5294. Residues 5311 to 5337 form a helical membrane-spanning segment; sequence LVAILPGVLVMVLVPVLLPRVYVYMAT. At 5338 to 5376 the chain is on the cytoplasmic side; sequence RTTMGRRRMKRKEKKLLRQSRLRLEDADVPEPTFKATEF.

In terms of assembly, probably forms covalent oligomers. In testis, primarily in haploid spermatids.

Its subcellular location is the cell membrane. Binds in a species-specific manner to the zona pellucida of the egg. May be involved in gamete recognition and/or signaling. The sequence is that of Zonadhesin (Zan) from Mus musculus (Mouse).